A 266-amino-acid chain; its full sequence is Tryptophan synthase alpha chain (266 aa).

Residues E47 and D58 each act as proton acceptor in the active site.

This sequence belongs to the TrpA family. Tetramer of two alpha and two beta chains.

Its subcellular location is the plastid. It localises to the chloroplast. It carries out the reaction (1S,2R)-1-C-(indol-3-yl)glycerol 3-phosphate + L-serine = D-glyceraldehyde 3-phosphate + L-tryptophan + H2O. Its pathway is amino-acid biosynthesis; L-tryptophan biosynthesis; L-tryptophan from chorismate: step 5/5. Functionally, the alpha subunit is responsible for the aldol cleavage of indoleglycerol phosphate to indole and glyceraldehyde 3-phosphate. In Cyanidium caldarium (Red alga), this protein is Tryptophan synthase alpha chain.